We begin with the raw amino-acid sequence, 155 residues long: Large ribosomal subunit protein bL9c (155 aa).

The protein belongs to the bacterial ribosomal protein bL9 family.

It localises to the plastid. Its subcellular location is the chloroplast. Binds to the 23S rRNA. The protein is Large ribosomal subunit protein bL9c of Porphyra purpurea (Red seaweed).